A 684-amino-acid polypeptide reads, in one-letter code: Early phosphoprotein p84 (684 aa).

Disordered stretches follow at residues 166-301, 317-336, 357-393, 407-452, and 569-657; these read LGGS…MSLP, SSAVSSSSNNHHHHHHHHNA, VVSSPSSTSPSSLLSLPRPSSAHSAGETVQESEAAAT, RAPA…SPRF, and SNSS…GPSF. Residues 180 to 191 are compositionally biased toward basic and acidic residues; that stretch reads EQQRRRQEQRHE. Positions 201 to 220 are enriched in gly residues; the sequence is AGGGGGGGASGGGGGGGSGG. 2 stretches are compositionally biased toward basic and acidic residues: residues 232 to 245 and 258 to 272; these read RDPRLMNRQKERRP and REAKRQKTTAQHEGH. Residues 261 to 264 carry the Nuclear localization signal motif; sequence KRQK. The segment covering 285–296 has biased composition (gly residues); sequence GGAGGGGGGGSG. A compositionally biased stretch (basic residues) spans 326 to 335; that stretch reads NHHHHHHHHN. Residues 359-377 are compositionally biased toward low complexity; sequence SSPSSTSPSSLLSLPRPSS. Residues 425–442 are compositionally biased toward polar residues; it reads STTPVSNCRVPPNSQESA. The segment covering 578–587 has biased composition (pro residues); that stretch reads PLPPPPPPPG. A compositionally biased stretch (gly residues) spans 598–608; that stretch reads RGGGGGGGGGR. A compositionally biased stretch (low complexity) spans 612-622; it reads RQAASSSSSSS.

Belongs to the herpesviridae U79/UL112 family. Isoforms 1, 2, 3 and 4 interacts with themselves and with each other via their shared N-terminal regions; these interactions are important to both their intranuclear targeting and the recruitment of UL44 to subnuclear sites for viral replication.

The protein resides in the host nucleus. Its subcellular location is the virion. In terms of biological role, needed for efficient replication. Recruits the DNA polymerase processivity factor to pre-replication foci. This chain is Early phosphoprotein p84 (UL112/UL113), found in Homo sapiens (Human).